The chain runs to 130 residues: Small ribosomal subunit protein uS11 (130 aa).

This sequence belongs to the universal ribosomal protein uS11 family. Part of the 30S ribosomal subunit. Interacts with proteins S7 and S18. Binds to IF-3.

Its function is as follows. Located on the platform of the 30S subunit, it bridges several disparate RNA helices of the 16S rRNA. Forms part of the Shine-Dalgarno cleft in the 70S ribosome. This chain is Small ribosomal subunit protein uS11, found in Shewanella frigidimarina (strain NCIMB 400).